The chain runs to 106 residues: Photosystem II 5 kDa protein, chloroplastic (106 aa).

A chloroplast-targeting transit peptide spans 1 to 76 (MASITMMSSF…ACSVAKTAMA (76 aa)). Residues C95 and C104 are joined by a disulfide bond.

Post-translationally, disulfide bond. Expressed in midvein, lamina and periphery of leaves (at protein level).

It is found in the plastid. The protein localises to the chloroplast thylakoid membrane. Its function is as follows. May be a component of the oxygen-evolving complex. This Petunia hybrida (Petunia) protein is Photosystem II 5 kDa protein, chloroplastic.